The chain runs to 392 residues: Succinate--CoA ligase [ADP-forming] subunit beta (392 aa).

The 240-residue stretch at 9 to 248 (KGILKQFGVA…ITEEDPLEYE (240 aa)) folds into the ATP-grasp domain. Residues lysine 50, 57–59 (GRG), glutamate 103, methionine 106, and glutamate 111 contribute to the ATP site. Mg(2+) contacts are provided by asparagine 203 and aspartate 217. Substrate-binding positions include asparagine 268 and 325 to 327 (GIV).

Belongs to the succinate/malate CoA ligase beta subunit family. In terms of assembly, heterotetramer of two alpha and two beta subunits. The cofactor is Mg(2+).

It catalyses the reaction succinate + ATP + CoA = succinyl-CoA + ADP + phosphate. The enzyme catalyses GTP + succinate + CoA = succinyl-CoA + GDP + phosphate. It functions in the pathway carbohydrate metabolism; tricarboxylic acid cycle; succinate from succinyl-CoA (ligase route): step 1/1. Functionally, succinyl-CoA synthetase functions in the citric acid cycle (TCA), coupling the hydrolysis of succinyl-CoA to the synthesis of either ATP or GTP and thus represents the only step of substrate-level phosphorylation in the TCA. The beta subunit provides nucleotide specificity of the enzyme and binds the substrate succinate, while the binding sites for coenzyme A and phosphate are found in the alpha subunit. The sequence is that of Succinate--CoA ligase [ADP-forming] subunit beta from Chlorobaculum parvum (strain DSM 263 / NCIMB 8327) (Chlorobium vibrioforme subsp. thiosulfatophilum).